The following is a 283-amino-acid chain: Movement protein (283 aa).

Belongs to the cucumovirus movement protein family.

The protein localises to the host cell junction. The protein resides in the host plasmodesma. Transports viral genome to neighboring plant cells directly through plasmosdesmata, without any budding. The movement protein allows efficient cell to cell propagation, by bypassing the host cell wall barrier. Acts by forming a tubular structure at the host plasmodesmata, enlarging it enough to allow free passage of virion capsids. The chain is Movement protein from Cucumis sativus (Cucumber).